The sequence spans 920 residues: Vacuolar membrane protease (920 aa).

Over 1 to 20 (MASSRAQRFNPIAFTPWPVT) the chain is Cytoplasmic. The chain crosses the membrane as a helical span at residues 21–41 (CITTIVYLALLIPILVINLVV). The Vacuolar segment spans residues 42-378 (PSAPETNPKG…AFAVFRLHTL (337 aa)). N-linked (GlcNAc...) asparagine glycosylation is found at N53, N116, and N119. The Zn(2+) site is built by H175 and D187. E221 (proton acceptor) is an active-site residue. E222 contributes to the Zn(2+) binding site. N-linked (GlcNAc...) asparagine glycosylation occurs at N238. Zn(2+) is bound by residues E247 and H306. A helical membrane pass occupies residues 379–399 (FAISVALLVIAPLVIFITSVI). At 400-433 (LSKTDRMYLFSMSKSLEGTGDQVSLRGLRGFSRT) the chain is on the cytoplasmic side. The helical transmembrane segment at 434–454 (PIILVIATTIPICLAYLLEKV) threads the bilayer. The Vacuolar portion of the chain corresponds to 455–463 (NPYIVHSSQ). The helical transmembrane segment at 464 to 484 (FSVWSMMFSAWIFLAWFLACA) threads the bilayer. Residues 485–495 (ADFFRPSALHR) lie on the Cytoplasmic side of the membrane. The chain crosses the membrane as a helical span at residues 496–516 (AYSYTWIFVATWIMLVINTVY). At 517 to 520 (ANQK) the chain is on the vacuolar side. A helical membrane pass occupies residues 521-541 (GIAAGYFLLFYFAGAFLATWI). Residues 542 to 659 (SYLELFALPR…TLPRWTWVLQ (118 aa)) lie on the Cytoplasmic side of the membrane. The interval 556–605 (ARQTTGRRPSSLSSRLLTSSADELRSNASPSTAEFPGAAGEDTDPTESTS) is disordered. The segment covering 559-575 (TTGRRPSSLSSRLLTSS) has biased composition (low complexity). The chain crosses the membrane as a helical span at residues 660–680 (LLLLAPIVLILVGQLALFLTA). At 681 to 693 (SMCQVGSDGVSTF) the chain is on the vacuolar side. A helical transmembrane segment spans residues 694-714 (VVYLACAVFTTLLCIPLFPLI). The Cytoplasmic portion of the chain corresponds to 715-720 (HRFTYH). The chain crosses the membrane as a helical span at residues 721–741 (IPTFLFLVFIGTLIYNLVAFP). Topologically, residues 742–920 (FSPANRLKTF…VEASHSFTIQ (179 aa)) are vacuolar. Residues N760, N788, and N832 are each glycosylated (N-linked (GlcNAc...) asparagine).

This sequence belongs to the peptidase M28 family. Requires Zn(2+) as cofactor.

The protein localises to the vacuole membrane. May be involved in vacuolar sorting and osmoregulation. This chain is Vacuolar membrane protease, found in Ajellomyces capsulatus (strain H143) (Darling's disease fungus).